Reading from the N-terminus, the 129-residue chain is Glycine cleavage system H protein (129 aa).

The region spanning 23 to 104 (TVTVGITQHA…SYSAWLFKLK (82 aa)) is the Lipoyl-binding domain. An N6-lipoyllysine modification is found at Lys-64.

This sequence belongs to the GcvH family. As to quaternary structure, the glycine cleavage system is composed of four proteins: P, T, L and H. (R)-lipoate is required as a cofactor.

The glycine cleavage system catalyzes the degradation of glycine. The H protein shuttles the methylamine group of glycine from the P protein to the T protein. This is Glycine cleavage system H protein from Nitrosomonas eutropha (strain DSM 101675 / C91 / Nm57).